A 216-amino-acid chain; its full sequence is GTP cyclohydrolase 1 (216 aa).

Zn(2+)-binding residues include Cys109, His112, and Cys180.

This sequence belongs to the GTP cyclohydrolase I family. In terms of assembly, toroid-shaped homodecamer, composed of two pentamers of five dimers.

It catalyses the reaction GTP + H2O = 7,8-dihydroneopterin 3'-triphosphate + formate + H(+). It participates in cofactor biosynthesis; 7,8-dihydroneopterin triphosphate biosynthesis; 7,8-dihydroneopterin triphosphate from GTP: step 1/1. The sequence is that of GTP cyclohydrolase 1 from Wigglesworthia glossinidia brevipalpis.